A 304-amino-acid chain; its full sequence is Bifunctional protein FolD (304 aa).

NADP(+) is bound by residues 167 to 169, serine 192, and isoleucine 233; that span reads GRS.

It belongs to the tetrahydrofolate dehydrogenase/cyclohydrolase family. As to quaternary structure, homodimer.

It catalyses the reaction (6R)-5,10-methylene-5,6,7,8-tetrahydrofolate + NADP(+) = (6R)-5,10-methenyltetrahydrofolate + NADPH. The enzyme catalyses (6R)-5,10-methenyltetrahydrofolate + H2O = (6R)-10-formyltetrahydrofolate + H(+). It functions in the pathway one-carbon metabolism; tetrahydrofolate interconversion. Functionally, catalyzes the oxidation of 5,10-methylenetetrahydrofolate to 5,10-methenyltetrahydrofolate and then the hydrolysis of 5,10-methenyltetrahydrofolate to 10-formyltetrahydrofolate. This is Bifunctional protein FolD from Rhodospirillum centenum (strain ATCC 51521 / SW).